Consider the following 417-residue polypeptide: Glucose-1-phosphate adenylyltransferase (417 aa).

Alpha-D-glucose 1-phosphate contacts are provided by residues tyrosine 105, glycine 170, 185–186, and serine 203; that span reads EK.

This sequence belongs to the bacterial/plant glucose-1-phosphate adenylyltransferase family. Homotetramer.

It catalyses the reaction alpha-D-glucose 1-phosphate + ATP + H(+) = ADP-alpha-D-glucose + diphosphate. Its pathway is glycan biosynthesis; glycogen biosynthesis. Its function is as follows. Involved in the biosynthesis of ADP-glucose, a building block required for the elongation reactions to produce glycogen. Catalyzes the reaction between ATP and alpha-D-glucose 1-phosphate (G1P) to produce pyrophosphate and ADP-Glc. This chain is Glucose-1-phosphate adenylyltransferase, found in Granulibacter bethesdensis (strain ATCC BAA-1260 / CGDNIH1).